Consider the following 159-residue polypeptide: Ribosome maturation factor RimP (159 aa).

Belongs to the RimP family.

It is found in the cytoplasm. Functionally, required for maturation of 30S ribosomal subunits. This chain is Ribosome maturation factor RimP, found in Halothermothrix orenii (strain H 168 / OCM 544 / DSM 9562).